The primary structure comprises 271 residues: Rhomboid-type serine protease 2 (271 aa).

The next 6 membrane-spanning stretches (helical) occupy residues 16–36 (GLAV…NLVY), 64–84 (HLSF…IVMF), 89–111 (GTLY…YCLI), 115–137 (LFPN…YFAV), 152–172 (FSFP…LLAP), and 176–196 (LPGH…ENWV). S125 serves as the catalytic Nucleophile. The active site involves H179. Residues 252 to 271 (HNTDTPAEPTFQGNGRVLGN) are disordered.

This sequence belongs to the peptidase S54 family.

The protein resides in the golgi apparatus membrane. Its subcellular location is the golgi apparatus. It localises to the cis-Golgi network membrane. It catalyses the reaction Cleaves type-1 transmembrane domains using a catalytic dyad composed of serine and histidine that are contributed by different transmembrane domains.. Functionally, probable rhomboid-type serine protease that catalyzes intramembrane proteolysis. The polypeptide is Rhomboid-type serine protease 2 (RBD2) (Kluyveromyces lactis (strain ATCC 8585 / CBS 2359 / DSM 70799 / NBRC 1267 / NRRL Y-1140 / WM37) (Yeast)).